A 1357-amino-acid polypeptide reads, in one-letter code: DNA-directed RNA polymerase subunit beta (1357 aa).

This sequence belongs to the RNA polymerase beta chain family. In terms of assembly, the RNAP catalytic core consists of 2 alpha, 1 beta, 1 beta' and 1 omega subunit. When a sigma factor is associated with the core the holoenzyme is formed, which can initiate transcription.

It carries out the reaction RNA(n) + a ribonucleoside 5'-triphosphate = RNA(n+1) + diphosphate. Its function is as follows. DNA-dependent RNA polymerase catalyzes the transcription of DNA into RNA using the four ribonucleoside triphosphates as substrates. This Pseudomonas fluorescens (strain ATCC BAA-477 / NRRL B-23932 / Pf-5) protein is DNA-directed RNA polymerase subunit beta.